The chain runs to 706 residues: G2/M phase-specific E3 ubiquitin-protein ligase (706 aa).

Residues 11–51 form a C2HC pre-PHD-type zinc finger; sequence NLACVFCRKHDDCPNKYGEKKTKEKWNLTVHYYCLLMSSGI. Residues 79-128 form a PHD-type 1 zinc finger; sequence LKCCVCKKNGASIGCVAPRCKRSYHFPCGLQRECIFQFTGNFASFCWDHR. The segment at 143 to 193 adopts a PHD-type 2; degenerate zinc-finger fold; it reads PCTICLEFIEPIPSYNILRSPCCKNAWFHRDCLQVQAINAGVFFFRCTICN. The segment at 237–286 adopts a PHD-type 3 zinc-finger fold; sequence RCRCKEGRDYNAPDSKWEIKRCQCCGSSGTHLACSSLRSWEQNWECLECR. The region spanning 371–698 is the HECT domain; the sequence is IWNSALDAFR…IRNTLRLEKE (328 aa).

As to expression, predominantly expressed in brain, liver, kidney, testes and ovary.

It localises to the nucleus. It is found in the nucleolus. Its subcellular location is the cytoplasm. The enzyme catalyses S-ubiquitinyl-[E2 ubiquitin-conjugating enzyme]-L-cysteine + [acceptor protein]-L-lysine = [E2 ubiquitin-conjugating enzyme]-L-cysteine + N(6)-ubiquitinyl-[acceptor protein]-L-lysine.. It functions in the pathway protein modification; protein ubiquitination. E3 ubiquitin-protein ligase which accepts ubiquitin from an E2 ubiquitin-conjugating enzyme in the form of a thioester and then directly transfers the ubiquitin to targeted substrates. Essential in early embryonic development to prevent apoptotic death. The sequence is that of G2/M phase-specific E3 ubiquitin-protein ligase (G2E3) from Homo sapiens (Human).